A 248-amino-acid polypeptide reads, in one-letter code: Probable transcriptional regulatory protein Acid_5948 (248 aa).

The protein belongs to the TACO1 family.

The protein resides in the cytoplasm. The sequence is that of Probable transcriptional regulatory protein Acid_5948 from Solibacter usitatus (strain Ellin6076).